The primary structure comprises 267 residues: RWD domain-containing protein 3 (267 aa).

The RWD domain occupies 7 to 114 (QELSALAAIF…LWTQQNLRHI (108 aa)). Interaction with UBE2I/UBC9 stretches follow at residues 13-15 (AAI) and 100-102 (VHE).

As to quaternary structure, interacts with UBE2I/UBC9, NFKBIA, HIF1A and NCOA2.

The protein localises to the nucleus. It localises to the cytoplasm. Its function is as follows. Enhancer of SUMO conjugation. Via its interaction with UBE2I/UBC9, increases SUMO conjugation to proteins by promoting the binding of E1 and E2 enzymes, thioester linkage between SUMO and UBE2I/UBC9 and transfer of SUMO to specific target proteins which include HIF1A, PIAS, NFKBIA, NR3C1 and TOP1. Positively regulates the NF-kappa-B signaling pathway by enhancing the sumoylation of NF-kappa-B inhibitor alpha (NFKBIA), promoting its stabilization which consequently leads to an increased inhibition of NF-kappa-B transcriptional activity. Negatively regulates the hypoxia-inducible factor-1 alpha (HIF1A) signaling pathway by increasing the sumoylation of HIF1A, promoting its stabilization, transcriptional activity and the expression of its target gene VEGFA during hypoxia. Has no effect on ubiquitination. This is RWD domain-containing protein 3 (Rwdd3) from Rattus norvegicus (Rat).